Reading from the N-terminus, the 2531-residue chain is Neurogenic locus notch homolog protein 1 (2531 aa).

The N-terminal stretch at M1 to A18 is a signal peptide. At A19–H1725 the chain is on the extracellular side. EGF-like domains follow at residues R20–Q58, D59–L99, L102–Q139, and Q140–R176. Cystine bridges form between C24–C37, C31–C46, C48–C57, C63–C74, C68–C87, C89–C98, C106–C117, C111–C127, C129–C138, C144–C155, C149–C164, C166–C175, C182–C195, C189–C204, C206–C215, C222–C233, C227–C243, C245–C254, C261–C272, C266–C281, C283–C292, C299–C312, C306–C321, C323–C332, C339–C350, C344–C359, C361–C370, C376–C387, C381–C398, C400–C409, C416–C429, C423–C438, and C440–C449. A glycan (N-linked (GlcNAc...) asparagine) is linked at N41. S65 carries O-linked (Glc...) serine glycosylation. The O-linked (Fuc...) threonine glycan is linked to T73. A glycan (O-linked (Fuc...) threonine) is linked at T116. An O-linked (Glc...) serine glycan is attached at S146. Residues D178–E216 enclose the EGF-like 5; calcium-binding domain. T194 carries O-linked (Fuc...) threonine glycosylation. The region spanning P218 to E255 is the EGF-like 6 domain. T232 carries an O-linked (Fuc...) threonine; alternate glycan. A glycan (O-linked (GalNAc...) threonine; alternate) is linked at T232. Positions N257 to T293 constitute an EGF-like 7; calcium-binding domain. The EGF-like 8; calcium-binding domain maps to D295–S333. Residue T311 is glycosylated (O-linked (Fuc...) threonine). The EGF-like 9; calcium-binding domain occupies N335 to H371. O-linked (Glc...) serine glycosylation occurs at S341. T349 carries O-linked (Fuc...) threonine glycosylation. The EGF-like 10 domain maps to L372–S410. The O-linked (Glc...) serine glycan is linked to S378. The 39-residue stretch at D412–E450 folds into the EGF-like 11; calcium-binding domain. Positions A420–N421 are interaction with DLL4. Ca(2+)-binding residues include T432 and S435. Residue S435 is glycosylated (O-linked (Glc...) serine). The interaction with DLL4 stretch occupies residues R448 to D452. D452, V453, and E455 together coordinate Ca(2+). The region spanning D452 to E488 is the EGF-like 12; calcium-binding domain. Cystine bridges form between C456–C467, C461–C476, and C478–C487. S458 is a glycosylation site (O-linked (Glc...) serine). Residue T466 is glycosylated (O-linked (Fuc...) threonine). 2 residues coordinate Ca(2+): D469 and Q470. Residues N490, T491, and E493 each contribute to the Ca(2+) site. Positions N490–Q526 constitute an EGF-like 13; calcium-binding domain. 75 disulfides stabilise this stretch: C494/C505, C499/C514, C516/C525, C532/C543, C537/C552, C554/C563, C570/C580, C575/C589, C591/C600, C607/C618, C612/C627, C629/C638, C645/C655, C650/C664, C666/C675, C682/C693, C687/C702, C704/C713, C720/C730, C725/C739, C741/C750, C757/C768, C762/C777, C779/C788, C795/C806, C800/C815, C817/C826, C833/C844, C838/C855, C857/C866, C873/C884, C878/C893, C895/C904, C911/C922, C916/C931, C933/C942, C949/C960, C954/C969, C971/C980, C987/C998, C992/C1007, C1009/C1018, C1025/C1036, C1030/C1045, C1047/C1056, C1063/C1074, C1068/C1083, C1085/C1094, C1101/C1122, C1116/C1131, C1133/C1142, C1149/C1160, C1154/C1169, C1171/C1180, C1187/C1198, C1192/C1207, C1209/C1218, C1225/C1244, C1238/C1253, C1255/C1264, C1271/C1284, C1276/C1293, C1295/C1304, C1311/C1322, C1316/C1334, C1336/C1345, C1352/C1363, C1357/C1372, C1374/C1383, C1391/C1403, C1397/C1414, C1416/C1425, C1449/C1472, C1454/C1467, and C1463/C1479. O-linked (Glc...) serine glycosylation is present at S496. Positions 507 and 508 each coordinate Ca(2+). An EGF-like 14; calcium-binding domain is found at D528–E564. A glycan (O-linked (Glc...) serine) is linked at S534. The EGF-like 15; calcium-binding domain maps to D566–E601. The region spanning N603–E639 is the EGF-like 16; calcium-binding domain. A glycan (O-linked (Glc...) serine) is linked at S609. An O-linked (Fuc...) threonine glycan is attached at T617. One can recognise an EGF-like 17; calcium-binding domain in the interval N641–N676. S647 carries O-linked (Glc...) serine glycosylation. The 37-residue stretch at N678–L714 folds into the EGF-like 18; calcium-binding domain. An O-linked (Fuc...) threonine glycan is attached at T692. Residues E716–D751 form the EGF-like 19; calcium-binding domain. An O-linked (Glc...) serine glycan is attached at S722. An EGF-like 20; calcium-binding domain is found at N753–Q789. The O-linked (Glc...) serine glycan is linked to S759. T767 carries an O-linked (Fuc...) threonine glycan. O-linked (GlcNAc) serine glycosylation occurs at S784. In terms of domain architecture, EGF-like 21; calcium-binding spans N791–E827. The O-linked (Glc...) serine glycan is linked to S797. T805 is a glycosylation site (O-linked (Fuc...) threonine). Residues V829–E867 form the EGF-like 22 domain. The EGF-like 23; calcium-binding domain maps to D869–E905. N888 is a glycosylation site (N-linked (GlcNAc...) asparagine). O-linked (GlcNAc) threonine glycosylation is present at T900. The EGF-like 24 domain maps to D907–E943. S921 carries an O-linked (Fuc) serine glycan. An EGF-like 25; calcium-binding domain is found at D945–E981. An O-linked (Glc...) serine glycan is attached at S951. N-linked (GlcNAc...) asparagine glycosylation is present at N959. Residues N983 to Q1019 enclose the EGF-like 26 domain. O-linked (Fuc...) threonine glycosylation occurs at T997. The EGF-like 27; calcium-binding domain maps to D1021 to Q1057. S1027 is a glycosylation site (O-linked (Glc...) serine). An O-linked (Fuc...) threonine glycan is attached at T1035. EGF-like domains lie at L1059–D1095 and L1097–E1143. S1065 is a glycosylation site (O-linked (Glc...) serine). The 37-residue stretch at E1145–S1181 folds into the EGF-like 30; calcium-binding domain. A glycan (O-linked (Fuc...) threonine) is linked at T1159. Residue N1179 is glycosylated (N-linked (GlcNAc...) asparagine). An EGF-like 31; calcium-binding domain is found at E1183–E1219. S1189 carries O-linked (Glc...) serine glycosylation. T1197 carries O-linked (Fuc...) threonine glycosylation. Residues N1221–E1265 form the EGF-like 32; calcium-binding domain. The N-linked (GlcNAc...) asparagine glycan is linked to N1241. EGF-like domains lie at D1267 to E1305, V1307 to E1346, D1348 to Q1384, and A1387 to H1426. S1273 carries an O-linked (Glc...) serine glycan. O-linked (Fuc...) threonine glycosylation occurs at T1362. The O-linked (GlcNAc...) threonine glycan is linked to T1379. An O-linked (Fuc...) threonine; alternate glycan is attached at T1402. A glycan (O-linked (GalNAc...) threonine; alternate) is linked at T1402. 3 LNR repeats span residues C1449–N1489, C1490–L1531, and Y1532–A1571. The Ca(2+) site is built by D1457, N1460, D1475, and D1478. The N-linked (GlcNAc...) asparagine glycan is linked to N1489. 5 disulfide bridges follow: C1490-C1514, C1496-C1509, C1505-C1521, C1536-C1549, and C1545-C1561. N1587 is a glycosylation site (N-linked (GlcNAc...) asparagine). T1715 carries O-linked (GalNAc...) threonine glycosylation. An interaction with PSEN1 region spans residues P1718–R1750. The chain crosses the membrane as a helical span at residues L1726 to L1746. Over S1747–K2531 the chain is Cytoplasmic. Residue K1749 forms a Glycyl lysine isopeptide (Lys-Gly) (interchain with G-Cter in ubiquitin) linkage. The disordered stretch occupies residues K1770–D1798. T1851 carries the post-translational modification Phosphothreonine. 5 ANK repeats span residues T1917–I1946, M1950–A1980, D1984–A2013, L2017–M2046, and K2050–I2079. The tract at residues L1937 to N1945 is HIF1AN-binding. A (3S)-3-hydroxyasparagine; by HIF1AN modification is found at N1945. The tract at residues L2004–N2012 is HIF1AN-binding. At N2012 the chain carries (3S)-3-hydroxyasparagine; by HIF1AN. Disordered regions lie at residues S2141–S2185, Q2382–V2428, and P2440–K2531. Over residues Q2382–S2395 the composition is skewed to low complexity. The segment covering P2440 to L2478 has biased composition (polar residues). Over residues P2488 to S2503 the composition is skewed to low complexity. The span at N2504–T2524 shows a compositional bias: polar residues.

Belongs to the NOTCH family. As to quaternary structure, heterodimer of a C-terminal fragment N(TM) and an N-terminal fragment N(EC) which are probably linked by disulfide bonds. Interacts with DNER, DTX1, DTX2 and RBPJ/RBPSUH. Also interacts with MAML1, MAML2 and MAML3 which act as transcriptional coactivators for NOTCH1. Notch 1 intracellular domain interacts with SNW1; the interaction involves multimerized NOTCH1 NICD and is implicated in a formation of an intermediate preactivation complex which associates with DNA-bound CBF-1/RBPJ. The activated membrane-bound form interacts with AAK1 which promotes NOTCH1 stabilization. Forms a trimeric complex with FBXW7 and SGK1. Interacts with HIF1AN. HIF1AN negatively regulates the function of notch intracellular domain (NICD), accelerating myogenic differentiation. Interacts (via NICD) with SNAI1 (via zinc fingers); the interaction induces SNAI1 degradation via MDM2-mediated ubiquitination and inhibits SNAI1-induced cell invasion. Interacts (via NICD) with MDM2A. Interacts (via NICD) with BCL6; the interaction decreases MAML1 recruitment by NOTCH1 NICD on target genes DNA and inhibits NOTCH1 transactivation activity. Interacts with THBS4. Interacts (via the EGF-like repeat region) with CCN3 (via CTCK domain). Interacts (via EGF-like domains) with DLL4 (via N-terminal DSL and MNNL domains). Interacts with ZMIZ1. Interacts (via NICD domain) with MEGF10 (via the cytoplasmic domain). Interacts with DLL1 and JAG1. Interacts (via NICD domain) with PRAG1. Forms a complex with PRAG1, N1ICD and MAML1, in a MAML1-dependent manner. Interacts (via transmembrane region) with PSEN1; the interaction is direct. Interacts with ZFP64. Post-translationally, synthesized in the endoplasmic reticulum as an inactive form which is proteolytically cleaved by a furin-like convertase in the trans-Golgi network before it reaches the plasma membrane to yield an active, ligand-accessible form. Cleavage results in a C-terminal fragment N(TM) and a N-terminal fragment N(EC). Following ligand binding, it is cleaved by ADAM17 to yield a membrane-associated intermediate fragment called notch extracellular truncation (NEXT). Following endocytosis, this fragment is then cleaved by one of the catalytic subunits of gamma-secretase (PSEN1 or PSEN2) to release a Notch-derived peptide containing the intracellular domain (NICD) from the membrane. Phosphorylated. In terms of processing, O-glycosylated on the EGF-like domains. O-glucosylated at Ser-435 by KDELC1 and KDELC2. Contains both O-linked fucose and O-linked glucose in the EGF-like domains 11, 12 and 13, which are interacting with the residues on DLL4. O-linked glycosylation by GALNT11 is involved in determination of left/right symmetry: glycosylation promotes activation of NOTCH1, possibly by promoting cleavage by ADAM17, modulating the balance between motile and immotile (sensory) cilia at the left-right organiser (LRO). MFNG-, RFNG- and LFNG-mediated modification of O-fucose residues at specific EGF-like domains results in inhibition of its activation by JAG1 and enhancement of its activation by DLL1 via an increased binding to DLL1. Post-translationally, ubiquitinated. Undergoes 'Lys-29'-linked polyubiquitination by ITCH; promotes the lysosomal degradation of non-activated internalized NOTCH1. Deubiquitination by USP12 is required for transport of internalized non-activated receptor from late endosomes to lysosomes for degradation. Monoubiquitination at Lys-1749 is required for activation by gamma-secretase cleavage, it promotes interaction with AAK1, which stabilizes it. Deubiquitination by EIF3F is necessary for nuclear import of activated Notch. Hydroxylated at Asn-1945 and Asn-2012 by HIF1AN. Hydroxylation reduces affinity for HI1AN and may thus indirectly modulate negative regulation of NICD. Expressed in the brain, kidney and spleen. Expressed in postnatal central nervous system (CNS) germinal zones and, in early postnatal life, within numerous cells throughout the CNS. Found in both subventricular and ventricular germinal zones.

It is found in the cell membrane. The protein resides in the late endosome membrane. It localises to the nucleus. In terms of biological role, functions as a receptor for membrane-bound ligands Jagged-1 (JAG1), Jagged-2 (JAG2) and Delta-1 (DLL1) to regulate cell-fate determination. Upon ligand activation through the released notch intracellular domain (NICD) it forms a transcriptional activator complex with RBPJ/RBPSUH and activates genes of the enhancer of split locus. Affects the implementation of differentiation, proliferation and apoptotic programs. Involved in angiogenesis; negatively regulates endothelial cell proliferation and migration and angiogenic sprouting. Involved in the maturation of both CD4(+) and CD8(+) cells in the thymus. Important for follicular differentiation and possibly cell fate selection within the follicle. During cerebellar development, functions as a receptor for neuronal DNER and is involved in the differentiation of Bergmann glia. Represses neuronal and myogenic differentiation. May play an essential role in postimplantation development, probably in some aspect of cell specification and/or differentiation. May be involved in mesoderm development, somite formation and neurogenesis. May enhance HIF1A function by sequestering HIF1AN away from HIF1A. Required for the THBS4 function in regulating protective astrogenesis from the subventricular zone (SVZ) niche after injury. Involved in determination of left/right symmetry by modulating the balance between motile and immotile (sensory) cilia at the left-right organiser (LRO). The polypeptide is Neurogenic locus notch homolog protein 1 (Notch1) (Rattus norvegicus (Rat)).